Reading from the N-terminus, the 170-residue chain is Ribosome maturation factor RimP (170 aa).

This sequence belongs to the RimP family.

The protein localises to the cytoplasm. Functionally, required for maturation of 30S ribosomal subunits. The polypeptide is Ribosome maturation factor RimP (Chlorobaculum parvum (strain DSM 263 / NCIMB 8327) (Chlorobium vibrioforme subsp. thiosulfatophilum)).